The sequence spans 933 residues: uncharacterized protein (933 aa).

The span at 1-28 shows a compositional bias: polar residues; that stretch reads MNGNLPHIQIQSPKNSLDHLNNGRQATH. 3 disordered regions span residues 1–135, 173–194, and 252–275; these read MNGN…GESD, MDNE…NAAD, and ATDF…ADAQ. Basic and acidic residues predominate over residues 29-47; it reads NFEHGKPGDREEANGHADA. The segment covering 49–59 has biased composition (low complexity); it reads SSSGRSRYLSS. Polar residues-rich tracts occupy residues 87-101 and 108-135; these read TLSF…SNTH and NRSS…GESD. Positions 173–182 are enriched in acidic residues; it reads MDNESSEEER. The span at 264–275 shows a compositional bias: polar residues; that stretch reads EPSSSRHTADAQ. WD repeat units lie at residues 314–353, 385–423, 425–465, 467–506, 517–563, 568–607, 617–657, and 665–710; these read SSNN…HARS, GHTA…CLCC, EHSD…VSFW, ELPE…FRTQ, AKGS…LELK, ANAQ…MHKT, ASVR…SVIS, and PSLR…AARK. Serine 722 is subject to Phosphoserine. The disordered stretch occupies residues 756–796; the sequence is NASQITNNENNGNDDIKKGDEPEEEHVGLRKNSTQEKNANL. Polar residues predominate over residues 757–768; that stretch reads ASQITNNENNGN. Basic and acidic residues predominate over residues 769-783; the sequence is DDIKKGDEPEEEHVG.

The protein resides in the endoplasmic reticulum. It is found in the nucleus. This is an uncharacterized protein from Schizosaccharomyces pombe (strain 972 / ATCC 24843) (Fission yeast).